A 179-amino-acid polypeptide reads, in one-letter code: Large ribosomal subunit protein uL5 (179 aa).

It belongs to the universal ribosomal protein uL5 family. As to quaternary structure, part of the 50S ribosomal subunit; part of the 5S rRNA/L5/L18/L25 subcomplex. Contacts the 5S rRNA and the P site tRNA. Forms a bridge to the 30S subunit in the 70S ribosome.

Its function is as follows. This is one of the proteins that bind and probably mediate the attachment of the 5S RNA into the large ribosomal subunit, where it forms part of the central protuberance. In the 70S ribosome it contacts protein S13 of the 30S subunit (bridge B1b), connecting the 2 subunits; this bridge is implicated in subunit movement. Contacts the P site tRNA; the 5S rRNA and some of its associated proteins might help stabilize positioning of ribosome-bound tRNAs. This chain is Large ribosomal subunit protein uL5, found in Saccharophagus degradans (strain 2-40 / ATCC 43961 / DSM 17024).